Consider the following 241-residue polypeptide: Pyridoxal phosphate phosphatase PHOSPHO2 (241 aa).

The active-site Nucleophile is aspartate 8. Aspartate 8 and aspartate 10 together coordinate Mg(2+). Residue aspartate 10 is the Proton donor of the active site. 2 residues coordinate substrate: aspartate 19 and aspartate 99. Mg(2+) is bound at residue aspartate 179.

This sequence belongs to the HAD-like hydrolase superfamily. PHOSPHO family. Mg(2+) is required as a cofactor.

It carries out the reaction pyridoxal 5'-phosphate + H2O = pyridoxal + phosphate. Its function is as follows. Phosphatase that has high activity toward pyridoxal 5'-phosphate (PLP). Also active at much lower level toward pyrophosphate, phosphoethanolamine (PEA), phosphocholine (PCho), phospho-l-tyrosine, fructose-6-phosphate, p-nitrophenyl phosphate, and h-glycerophosphate. This is Pyridoxal phosphate phosphatase PHOSPHO2 (Phospho2) from Mus musculus (Mouse).